The sequence spans 374 residues: Putative phosphoserine aminotransferase (374 aa).

Arg-48 lines the L-glutamate pocket. Residues Ala-82–Thr-83, Phe-106, Thr-152, Asp-174, and Gln-197 each bind pyridoxal 5'-phosphate. Lys-198 is subject to N6-(pyridoxal phosphate)lysine. Asn-249 to Thr-250 contacts pyridoxal 5'-phosphate.

The protein belongs to the class-V pyridoxal-phosphate-dependent aminotransferase family. SerC subfamily. Homodimer. Requires pyridoxal 5'-phosphate as cofactor.

Its subcellular location is the cytoplasm. It catalyses the reaction O-phospho-L-serine + 2-oxoglutarate = 3-phosphooxypyruvate + L-glutamate. The catalysed reaction is 4-(phosphooxy)-L-threonine + 2-oxoglutarate = (R)-3-hydroxy-2-oxo-4-phosphooxybutanoate + L-glutamate. The protein operates within amino-acid biosynthesis; L-serine biosynthesis; L-serine from 3-phospho-D-glycerate: step 2/3. Its pathway is cofactor biosynthesis; pyridoxine 5'-phosphate biosynthesis; pyridoxine 5'-phosphate from D-erythrose 4-phosphate: step 3/5. In terms of biological role, catalyzes the reversible conversion of 3-phosphohydroxypyruvate to phosphoserine and of 3-hydroxy-2-oxo-4-phosphonooxybutanoate to phosphohydroxythreonine. In Mycolicibacterium paratuberculosis (strain ATCC BAA-968 / K-10) (Mycobacterium paratuberculosis), this protein is Putative phosphoserine aminotransferase.